We begin with the raw amino-acid sequence, 126 residues long: Aspartate 1-decarboxylase (126 aa).

Ser25 serves as the catalytic Schiff-base intermediate with substrate; via pyruvic acid. Residue Ser25 is modified to Pyruvic acid (Ser). Thr57 is a binding site for substrate. Residue Tyr58 is the Proton donor of the active site. 73–75 (GGA) provides a ligand contact to substrate.

This sequence belongs to the PanD family. As to quaternary structure, heterooctamer of four alpha and four beta subunits. Pyruvate serves as cofactor. Is synthesized initially as an inactive proenzyme, which is activated by self-cleavage at a specific serine bond to produce a beta-subunit with a hydroxyl group at its C-terminus and an alpha-subunit with a pyruvoyl group at its N-terminus.

The protein localises to the cytoplasm. It carries out the reaction L-aspartate + H(+) = beta-alanine + CO2. The protein operates within cofactor biosynthesis; (R)-pantothenate biosynthesis; beta-alanine from L-aspartate: step 1/1. Functionally, catalyzes the pyruvoyl-dependent decarboxylation of aspartate to produce beta-alanine. The protein is Aspartate 1-decarboxylase of Acinetobacter baylyi (strain ATCC 33305 / BD413 / ADP1).